Here is an 842-residue protein sequence, read N- to C-terminus: Follistatin-related protein 4 (842 aa).

Residues 1–22 (MKPGGFWLHLTLLGASLPAALG) form the signal peptide. A Kazal-like domain is found at 81-135 (KTGEPECQCLEACRPSYVPVCGSDGRFYENHCKLHRAACLLGKRITVIHSKDCFL). Disulfide bonds link cysteine 87–cysteine 119, cysteine 93–cysteine 112, and cysteine 101–cysteine 133. Residues 174–209 (QKRLLVESLFRDLDADGNGHLSSSELAQHVLKKQDL) form the EF-hand domain. Aspartate 187, aspartate 189, asparagine 191, histidine 193, and glutamate 198 together coordinate Ca(2+). Ig-like domains lie at 251 to 338 (PEDR…LQVN) and 341 to 426 (PVIR…EDIS). 2 disulfide bridges follow: cysteine 270–cysteine 321 and cysteine 362–cysteine 413. A glycan (N-linked (GlcNAc...) asparagine) is linked at asparagine 318.

It is found in the secreted. The polypeptide is Follistatin-related protein 4 (FSTL4) (Homo sapiens (Human)).